The sequence spans 72 residues: Translation initiation factor IF-1 (72 aa).

The region spanning M1 to K72 is the S1-like domain.

It belongs to the IF-1 family. Component of the 30S ribosomal translation pre-initiation complex which assembles on the 30S ribosome in the order IF-2 and IF-3, IF-1 and N-formylmethionyl-tRNA(fMet); mRNA recruitment can occur at any time during PIC assembly.

Its subcellular location is the cytoplasm. Its function is as follows. One of the essential components for the initiation of protein synthesis. Stabilizes the binding of IF-2 and IF-3 on the 30S subunit to which N-formylmethionyl-tRNA(fMet) subsequently binds. Helps modulate mRNA selection, yielding the 30S pre-initiation complex (PIC). Upon addition of the 50S ribosomal subunit IF-1, IF-2 and IF-3 are released leaving the mature 70S translation initiation complex. The sequence is that of Translation initiation factor IF-1 from Clostridium novyi (strain NT).